The primary structure comprises 556 residues: Serine beta-lactamase-like protein LACTB, mitochondrial (556 aa).

The transit peptide at Met-1–Leu-117 directs the protein to the mitochondrion. The active-site Acyl-ester intermediate is the Ser-166. Over residues Glu-249–Gly-282 the composition is skewed to basic and acidic residues. A disordered region spans residues Glu-249–Lys-290. N6-succinyllysine occurs at positions 290 and 291. Residues Lys-304 and Lys-349 each carry the N6-acetyllysine modification.

This sequence belongs to the peptidase S12 family.

The protein localises to the mitochondrion. Its function is as follows. Mitochondrial serine protease that acts as a regulator of mitochondrial lipid metabolism. Acts by decreasing protein levels of PISD, a mitochondrial enzyme that converts phosphatidylserine (PtdSer) to phosphatidylethanolamine (PtdEtn), thereby affecting mitochondrial lipid metabolism. It is unclear whether it acts directly by mediating proteolysis of PISD or by mediating proteolysis of another lipid metabolism protein. This Bos taurus (Bovine) protein is Serine beta-lactamase-like protein LACTB, mitochondrial.